We begin with the raw amino-acid sequence, 238 residues long: Ribonuclease PH (238 aa).

Residues Arg-86 and 124-126 contribute to the phosphate site; that span reads GTR.

This sequence belongs to the RNase PH family. In terms of assembly, homohexameric ring arranged as a trimer of dimers.

It catalyses the reaction tRNA(n+1) + phosphate = tRNA(n) + a ribonucleoside 5'-diphosphate. Phosphorolytic 3'-5' exoribonuclease that plays an important role in tRNA 3'-end maturation. Removes nucleotide residues following the 3'-CCA terminus of tRNAs; can also add nucleotides to the ends of RNA molecules by using nucleoside diphosphates as substrates, but this may not be physiologically important. Probably plays a role in initiation of 16S rRNA degradation (leading to ribosome degradation) during starvation. The protein is Ribonuclease PH of Brucella melitensis biotype 2 (strain ATCC 23457).